A 196-amino-acid polypeptide reads, in one-letter code: uncharacterized protein (196 aa).

It belongs to the flavoredoxin family. The cofactor is FMN.

This is an uncharacterized protein from Aquifex aeolicus (strain VF5).